The following is a 215-amino-acid chain: GTP-binding nuclear protein Ran (215 aa).

Positions 6 to 170 constitute a Small GTPase Ran-type domain; the sequence is DIPTFKLVLV…LWLARKLLGD (165 aa). GTP-binding positions include 17-24, 35-41, Gly67, 121-124, and 149-151; these read DGGTGKTT, EKKYVAT, NKVD, and SAK. Residues 36 to 44 are switch-I; that stretch reads KKYVATLGV. The tract at residues 67 to 83 is switch-II; that stretch reads GQEKFGGLRDGYYIQGQ.

It belongs to the small GTPase superfamily. Ran family. As to quaternary structure, found in a nuclear export complex with RanGTP, exportin and pre-miRNA.

The protein resides in the nucleus. Its function is as follows. GTP-binding protein involved in nucleocytoplasmic transport. Required for the import of protein into the nucleus and also for RNA export. Involved in chromatin condensation and control of cell cycle. This is GTP-binding nuclear protein Ran from Brugia malayi (Filarial nematode worm).